Reading from the N-terminus, the 223-residue chain is Cutinase 4 (223 aa).

The N-terminal stretch at 1–26 (MPLPLLPPLLLPLEALLDLALHLVDS) is a signal peptide. A disulfide bridge links Cys-60 with Cys-133. Ser-144 (nucleophile) is an active-site residue. Cys-187 and Cys-194 are joined by a disulfide. Asp-191 is an active-site residue. His-203 serves as the catalytic Proton donor/acceptor.

The protein belongs to the cutinase family. In terms of processing, the 2 disulfide bonds play a critical role in holding the catalytic residues in juxta-position; reduction of the disulfide bridges results in the complete inactivation of the enzyme.

The protein localises to the secreted. The catalysed reaction is cutin + H2O = cutin monomers.. Its function is as follows. Catalyzes the hydrolysis of complex carboxylic polyesters found in the cell wall of plants. Degrades cutin, a macromolecule that forms the structure of the plant cuticle. Also degrades suberin, a specialized macromolecule found in the cell wall of various plant tissues. This chain is Cutinase 4, found in Emericella nidulans (strain FGSC A4 / ATCC 38163 / CBS 112.46 / NRRL 194 / M139) (Aspergillus nidulans).